Consider the following 561-residue polypeptide: DNA ligase B (561 aa).

The active-site N6-AMP-lysine intermediate is the Lys-125.

This sequence belongs to the NAD-dependent DNA ligase family. LigB subfamily.

The catalysed reaction is NAD(+) + (deoxyribonucleotide)n-3'-hydroxyl + 5'-phospho-(deoxyribonucleotide)m = (deoxyribonucleotide)n+m + AMP + beta-nicotinamide D-nucleotide.. Its function is as follows. Catalyzes the formation of phosphodiester linkages between 5'-phosphoryl and 3'-hydroxyl groups in double-stranded DNA using NAD as a coenzyme and as the energy source for the reaction. The chain is DNA ligase B from Salmonella paratyphi B (strain ATCC BAA-1250 / SPB7).